A 47-amino-acid chain; its full sequence is MSETIEDRLLNKQVCMRCNARNPTDAESCRKCGYKNLRTKASERRSA.

The protein belongs to the eukaryotic ribosomal protein eL40 family.

This chain is Large ribosomal subunit protein eL40, found in Halobacterium salinarum (strain ATCC 29341 / DSM 671 / R1).